A 117-amino-acid polypeptide reads, in one-letter code: Large ribosomal subunit protein eL18 (117 aa).

It belongs to the eukaryotic ribosomal protein eL18 family.

The protein is Large ribosomal subunit protein eL18 of Halobacterium salinarum (strain ATCC 29341 / DSM 671 / R1).